A 183-amino-acid chain; its full sequence is Ribosomal RNA small subunit methyltransferase G (183 aa).

S-adenosyl-L-methionine-binding positions include G60, F65, 111–112 (IE), and R125.

It belongs to the methyltransferase superfamily. RNA methyltransferase RsmG family.

The protein localises to the cytoplasm. It carries out the reaction guanosine(527) in 16S rRNA + S-adenosyl-L-methionine = N(7)-methylguanosine(527) in 16S rRNA + S-adenosyl-L-homocysteine. Functionally, specifically methylates the N7 position of guanine in position 527 of 16S rRNA. This is Ribosomal RNA small subunit methyltransferase G from Campylobacter hominis (strain ATCC BAA-381 / DSM 21671 / CCUG 45161 / LMG 19568 / NCTC 13146 / CH001A).